The following is a 493-amino-acid chain: MVSSVSLFASLTPYLVSALLLFLLLEQLFYRVKKRNLPGPLFVFPIIGNVVALIRDPTSFWDKQSAMADTSVGLSVNYLIGKFIIYIKDAELSNKVLSNIRPDAFQLTGHPFGKKLFGDHSLIFMFGEDHKSVRRQVAPNFTRKPLSAYSSLQQIVILRHLRQWEESFSSGSRPVSMRQLIRELNLETSQTVFVGPYLDKEVKKTICDDYSLLTLGTMAIPIDLPGFTFGEARQAVSRLVNTMSVCVGKSKAKMAAGENPTCLVDFWTHSIIEENPPPPHSKDKEISCVLVDFMFASQDASTSSLLWAVVMLESEPEVLRRVREDVARFWSSESNELITADQLAEMKYTRAVAREVLRYRPPASMIPHVAVSDFRLTESYTIPKGTIVFPSLFDASFQGFTEPDRFDPDRFSETRQEDEVFKRNFLTFGNGSHQCVGQRYAMNHLVLFIAMFSSMFDFKRVRSDGCDDIVHIPTMSPKDGCTVFLSSRLVTSP.

A helical transmembrane segment spans residues Val5 to Leu25. Cys435 contributes to the heme binding site.

This sequence belongs to the cytochrome P450 family. Requires heme as cofactor. In terms of tissue distribution, very weak expression in roots and root hairs. Not detected in the root tips.

The protein localises to the membrane. The catalysed reaction is 5-dehydroepisterol + NADPH + O2 + H(+) = ergosta-5,7,22,24(28)-tetraen-3beta-ol + NADP(+) + 2 H2O. It functions in the pathway steroid biosynthesis; sterol biosynthesis. Its function is as follows. Required to form the C-22 double bond in the sterol side chain. Possesses C-22 desaturase activity toward beta-sitosterol and produces stigmasterol. The polypeptide is Cytochrome P450 710A4 (Arabidopsis thaliana (Mouse-ear cress)).